The following is a 197-amino-acid chain: Cyclin-dependent kinase inhibitor 1B (197 aa).

Positions 1-11 (MSNVRVSNGSP) are enriched in polar residues. The tract at residues 1 to 34 (MSNVRVSNGSPSLERMDARQAEHPKPSACRNLFG) is disordered. The residue at position 10 (Ser-10) is a Phosphoserine; by UHMK1. Basic and acidic residues predominate over residues 14–25 (ERMDARQAEHPK). The segment at 51–91 (DMEEASQRKWNFDFQNHKPLEGRYEWQEVERGSLPEFYYRP) is interaction with CDK2. The residue at position 74 (Tyr-74) is a Phosphotyrosine; by SRC. Residues 86–197 (EFYYRPPRPP…PKKPGLRRQT (112 aa)) form a disordered region. Tyr-88 is subject to Phosphotyrosine; by ABL, LYN, SRC and JAK2. The residue at position 89 (Tyr-89) is a Phosphotyrosine. Residues 104–113 (QESQDVSGSR) are compositionally biased toward polar residues. Positions 153-169 (KRPAAEDSSSQNKRANR) match the Nuclear localization signal motif. Thr-170 bears the Phosphothreonine; by CaMK1 mark. A compositionally biased stretch (polar residues) spans 175 to 186 (SDGSPNAGTVEQ). Thr-187 is modified (phosphothreonine; by PKB/AKT1, CDK1 and CDK2). Thr-197 carries the post-translational modification Phosphothreonine; by CaMK1, PKB/AKT1, RPS6KA1, RPS6KA3 and PIM1.

It belongs to the CDI family. In terms of assembly, forms a ternary complex composed of CCNE1, CDK2 and CDKN1B. Interacts directly with CCNE1; the interaction is inhibited by CDK2-dependent phosphorylation on Thr-187. Interacts with COPS5, subunit of the COP9 signalosome complex; the interaction leads to CDKN1B degradation. Interacts with NUP50; the interaction leads to nuclear import and degradation of phosphorylated CDKN1B. Interacts with CCND1 and SNX6. Interacts (Thr-197-phosphorylated form) with 14-3-3 proteins, binds strongly YWHAQ, weakly YWHAE and YWHAH, but not YWHAB nor YWHAZ; the interaction with YWHAQ results in translocation to the cytoplasm. Interacts with AKT1 and LYN; the interactions lead to cytoplasmic mislocation, phosphorylation of CDKN1B and inhibition of cell cycle arrest. Forms a ternary complex with CCNA2 and CDK2; CDKN1B inhibits the kinase activity of CDK2 through conformational rearrangements. Interacts (unphosphorylated form) with CDK2. Forms a complex with CDK2 and SPDYA, but does not directly interact with SPDYA. Forms a ternary complex composed of cyclin D, CDK4 and CDKN1B. Interacts (phosphorylated on Tyr-88 and Tyr-89) with CDK4; the interaction is required for cyclin D and CDK4 complex assembly, induces nuclear translocation and activates the CDK4 kinase activity. Interacts with GRB2. Interacts with PIM1. Identified in a complex with SKP1, SKP2 and CKS1B. Interacts with UHMK1; the interaction leads to cytoplasmic mislocation, phosphorylation of CDKN1B and inhibition of cell cycle arrest. Also interacts with CDK1. Dephosphorylated on Thr-187 by PPM1H, leading to CDKN1B stability. Post-translationally, phosphorylated; phosphorylation occurs on serine, threonine and tyrosine residues. Phosphorylation on Ser-10 is the major site of phosphorylation in resting cells, takes place at the G(0)-G(1) phase and leads to protein stability. Phosphorylation on other sites is greatly enhanced by mitogens, growth factors, MYC and in certain cancer cell lines. The phosphorylated form found in the cytoplasm is inactivate. Phosphorylation on Thr-197 is required for interaction with 14-3-3 proteins. Phosphorylation on Thr-187, by CDK1 and CDK2 leads to protein ubiquitination and proteasomal degradation. Tyrosine phosphorylation promotes this process. Phosphorylation by PKB/AKT1 can be suppressed by LY294002, an inhibitor of the catalytic subunit of PI3K. Phosphorylation on Tyr-88 and Tyr-89 has no effect on binding CDK2, but is required for binding CDK4. Dephosphorylated on tyrosine residues by G-CSF. Dephosphorylated on Thr-187 by PPM1H, leading to CDKN1B stability. Ubiquitinated; in the cytoplasm by the KPC complex (composed of RNF123/KPC1 and UBAC1/KPC2) and, in the nucleus, by SCF(SKP2). The latter requires prior phosphorylation on Thr-187. Ubiquitinated; by a TRIM21-containing SCF(SKP2)-like complex; leads to its degradation. In terms of processing, subject to degradation in the lysosome. Interaction with SNX6 promotes lysosomal degradation.

The protein resides in the nucleus. Its subcellular location is the cytoplasm. It localises to the endosome. Important regulator of cell cycle progression. Inhibits the kinase activity of CDK2 bound to cyclin A, but has little inhibitory activity on CDK2 bound to SPDYA. Involved in G1 arrest. Potent inhibitor of cyclin E- and cyclin A-CDK2 complexes. Forms a complex with cyclin type D-CDK4 complexes and is involved in the assembly, stability, and modulation of CCND1-CDK4 complex activation. Acts either as an inhibitor or an activator of cyclin type D-CDK4 complexes depending on its phosphorylation state and/or stoichometry. The protein is Cyclin-dependent kinase inhibitor 1B (Cdkn1b) of Mus musculus (Mouse).